The sequence spans 155 residues: Vasotocin-neurophysin VT 1 (155 aa).

Residues 1 to 20 (MPDSTIPLLCVLGLLALSSA) form the signal peptide. Cys21 and Cys26 are oxidised to a cystine. Gly29 is modified (glycine amide). 7 cysteine pairs are disulfide-bonded: Cys41-Cys85, Cys44-Cys58, Cys52-Cys75, Cys59-Cys65, Cys92-Cys105, Cys99-Cys117, and Cys106-Cys111.

The protein belongs to the vasopressin/oxytocin family. In terms of processing, seven disulfide bonds are present in neurophysin.

The protein localises to the secreted. Its function is as follows. Vasotocin is probably an antidiuretic hormone. The chain is Vasotocin-neurophysin VT 1 from Oncorhynchus masou (Cherry salmon).